Consider the following 368-residue polypeptide: Protein Wnt-1 (368 aa).

Positions 1-25 (MRGPALLLALRALCALSALRGTARA) are cleaved as a signal peptide. Cystine bridges form between Cys-91–Cys-102, Cys-141–Cys-149, Cys-151–Cys-168, Cys-216–Cys-230, Cys-218–Cys-225, Cys-297–Cys-328, Cys-313–Cys-323, Cys-327–Cys-367, Cys-343–Cys-358, Cys-345–Cys-355, and Cys-350–Cys-351. Residue Ser-222 is the site of O-palmitoleoyl serine; by PORCN attachment.

Belongs to the Wnt family. As to quaternary structure, forms a soluble 1:1 complex with AFM; this prevents oligomerization and is required for prolonged biological activity. The complex with AFM may represent the physiological form in body fluids. Interacts with PORCN. In terms of processing, N-glycosylated. N-glycosylation favors subsequent palmitoleoylation. Post-translationally, palmitoleoylation is required for efficient binding to frizzled receptors. Palmitoleoylation is necessary for proper trafficking to cell surface. Depalmitoleoylated by NOTUM, leading to inhibit Wnt signaling pathway.

The protein resides in the secreted. Its subcellular location is the extracellular space. The protein localises to the extracellular matrix. Its function is as follows. Ligand for members of the frizzled family of seven transmembrane receptors. Acts in the canonical Wnt signaling pathway by promoting beta-catenin-dependent transcriptional activation. Developmental protein that promotes cell proliferation in the developing spinal cord. Has a role in osteoblast function, bone development and bone homeostasis. The sequence is that of Protein Wnt-1 (WNT1) from Gallus gallus (Chicken).